A 109-amino-acid chain; its full sequence is Class I hydrophobin 18 (109 aa).

Residues 1–20 form the signal peptide; the sequence is MFTEQVLNVIILLQTATVTA. Cystine bridges form between C28–C88, C35–C82, C36–C69, and C89–C102. N91 and N106 each carry an N-linked (GlcNAc...) asparagine glycan.

Belongs to the fungal hydrophobin family. Self-assembles to form functional amyloid fibrils called rodlets. Self-assembly into fibrillar rodlets occurs spontaneously at hydrophobic:hydrophilic interfaces and the rodlets further associate laterally to form amphipathic monolayers.

The protein resides in the secreted. It is found in the cell wall. In terms of biological role, aerial growth, conidiation, and dispersal of filamentous fungi in the environment rely upon a capability of their secreting small amphipathic proteins called hydrophobins (HPBs) with low sequence identity. Class I can self-assemble into an outermost layer of rodlet bundles on aerial cell surfaces, conferring cellular hydrophobicity that supports fungal growth, development and dispersal; whereas Class II form highly ordered films at water-air interfaces through intermolecular interactions but contribute nothing to the rodlet structure. The sequence is that of Class I hydrophobin 18 from Pleurotus ostreatus (strain PC15) (Oyster mushroom).